A 355-amino-acid chain; its full sequence is 3-dehydroquinate synthase (355 aa).

NAD(+) is bound by residues Gly98–Asp102, Thr122–Thr123, Lys135, Lys144, and Thr162–Thr165. Glu177, His240, and His257 together coordinate Zn(2+).

It belongs to the sugar phosphate cyclases superfamily. Dehydroquinate synthase family. Co(2+) serves as cofactor. Requires Zn(2+) as cofactor. NAD(+) is required as a cofactor.

The protein localises to the cytoplasm. It catalyses the reaction 7-phospho-2-dehydro-3-deoxy-D-arabino-heptonate = 3-dehydroquinate + phosphate. It participates in metabolic intermediate biosynthesis; chorismate biosynthesis; chorismate from D-erythrose 4-phosphate and phosphoenolpyruvate: step 2/7. In terms of biological role, catalyzes the conversion of 3-deoxy-D-arabino-heptulosonate 7-phosphate (DAHP) to dehydroquinate (DHQ). The protein is 3-dehydroquinate synthase of Dictyoglomus turgidum (strain DSM 6724 / Z-1310).